The sequence spans 495 residues: Soyasapogenol B glucuronide galactosyltransferase (495 aa).

An anthocyanidin contacts are provided by T18 and H20. The Proton acceptor role is filled by H20. Residue D123 is the Charge relay of the active site. S291, W349, A350, H367, N371, T372, and E375 together coordinate UDP. A390 contacts an anthocyanidin.

The protein belongs to the UDP-glycosyltransferase family.

The catalysed reaction is soyasapogenol B 3-O-beta-D-glucuronate + UDP-alpha-D-galactose = soyasaponin III + UDP + H(+). Its function is as follows. Glycosyltransferase that transfers a galactosyl group from UDP-galactose to soyasapogenol B monoglucuronide in the biosynthetic pathway for soyasaponins. This is Soyasapogenol B glucuronide galactosyltransferase (GmSGT2) from Glycine max (Soybean).